Reading from the N-terminus, the 192-residue chain is 7-methyl-GTP pyrophosphatase (192 aa).

The active-site Proton acceptor is Asp69.

It belongs to the Maf family. YceF subfamily. A divalent metal cation serves as cofactor.

Its subcellular location is the cytoplasm. It catalyses the reaction N(7)-methyl-GTP + H2O = N(7)-methyl-GMP + diphosphate + H(+). Nucleoside triphosphate pyrophosphatase that hydrolyzes 7-methyl-GTP (m(7)GTP). May have a dual role in cell division arrest and in preventing the incorporation of modified nucleotides into cellular nucleic acids. The protein is 7-methyl-GTP pyrophosphatase (maf-1) of Pseudomonas syringae pv. tomato (strain ATCC BAA-871 / DC3000).